The primary structure comprises 333 residues: MGKVILGIETSCDETAVSLVEDGRKVLISLLSSQVDLHRLYGGVVPEIASRRHLELIFPLLDEAFRKFPREKIAAVAVTYGPGLVGALLVGLSVAKSLSYALNVPLIGVNHMEGHIFANFLEDANPVFPALVLVVSGGHTDLIFMRGFGDYELLGETIDDAAGECFDKVGRVLNLPYPAGPVIDRLSKKGKPIYKFPVARLKEEGYNFSFSGLKTAVRVFREKNPEAKVEDIAASFQEALVRALVENTEKALKECMPAKLYLAGGVAANSRLREEFLNLGKTYNVPVHFPSLQYCTDNAAMIAAAGYHRYLSGKYAPLNLNAYPSLMLGEERY.

Positions 111 and 115 each coordinate Fe cation. Substrate contacts are provided by residues 134 to 138, Asp167, Gly180, Asp184, and Asn269; that span reads VVSGG. Residue Asp297 participates in Fe cation binding.

The protein belongs to the KAE1 / TsaD family. Fe(2+) serves as cofactor.

Its subcellular location is the cytoplasm. It carries out the reaction L-threonylcarbamoyladenylate + adenosine(37) in tRNA = N(6)-L-threonylcarbamoyladenosine(37) in tRNA + AMP + H(+). Its function is as follows. Required for the formation of a threonylcarbamoyl group on adenosine at position 37 (t(6)A37) in tRNAs that read codons beginning with adenine. Is involved in the transfer of the threonylcarbamoyl moiety of threonylcarbamoyl-AMP (TC-AMP) to the N6 group of A37, together with TsaE and TsaB. TsaD likely plays a direct catalytic role in this reaction. This Carboxydothermus hydrogenoformans (strain ATCC BAA-161 / DSM 6008 / Z-2901) protein is tRNA N6-adenosine threonylcarbamoyltransferase.